A 260-amino-acid chain; its full sequence is Cytochrome c oxidase subunit 3 (260 aa).

The next 6 membrane-spanning stretches (helical) occupy residues 30–50, 81–101, 126–146, 158–178, 196–216, and 239–259; these read LILWFHINSTILFILGTVLLV, GMILFITSEVCLFFAFFWAFF, FLVPLLNTAVLLSSGVTVTWA, AIQSLTLTVFLGVYFTILQAW, FFVATGFHGLHVLIGTAFLAV, and WYWHFVDVVWLFLYICIYWWG.

It belongs to the cytochrome c oxidase subunit 3 family. As to quaternary structure, component of the cytochrome c oxidase (complex IV, CIV), a multisubunit enzyme composed of a catalytic core of 3 subunits and several supernumerary subunits. The complex exists as a monomer or a dimer and forms supercomplexes (SCs) in the inner mitochondrial membrane with ubiquinol-cytochrome c oxidoreductase (cytochrome b-c1 complex, complex III, CIII).

It is found in the mitochondrion inner membrane. It carries out the reaction 4 Fe(II)-[cytochrome c] + O2 + 8 H(+)(in) = 4 Fe(III)-[cytochrome c] + 2 H2O + 4 H(+)(out). In terms of biological role, component of the cytochrome c oxidase, the last enzyme in the mitochondrial electron transport chain which drives oxidative phosphorylation. The respiratory chain contains 3 multisubunit complexes succinate dehydrogenase (complex II, CII), ubiquinol-cytochrome c oxidoreductase (cytochrome b-c1 complex, complex III, CIII) and cytochrome c oxidase (complex IV, CIV), that cooperate to transfer electrons derived from NADH and succinate to molecular oxygen, creating an electrochemical gradient over the inner membrane that drives transmembrane transport and the ATP synthase. Cytochrome c oxidase is the component of the respiratory chain that catalyzes the reduction of oxygen to water. Electrons originating from reduced cytochrome c in the intermembrane space (IMS) are transferred via the dinuclear copper A center (CU(A)) of subunit 2 and heme A of subunit 1 to the active site in subunit 1, a binuclear center (BNC) formed by heme A3 and copper B (CU(B)). The BNC reduces molecular oxygen to 2 water molecules using 4 electrons from cytochrome c in the IMS and 4 protons from the mitochondrial matrix. This Pisaster ochraceus (Ochre sea star) protein is Cytochrome c oxidase subunit 3 (COIII).